Consider the following 361-residue polypeptide: Phospho-N-acetylmuramoyl-pentapeptide-transferase (361 aa).

The next 10 helical transmembrane spans lie at 25-45 (RGILAALTALFLSLWMGPAVI), 73-93 (TMGGSLILLTVTLSVLLWGDL), 98-118 (VWLVLAVMICFGAIGWYDDWI), 139-159 (IFGLAAGLFLYYTADVPAAIT), 168-188 (IALPLAGVSFVVIAYFWIVGF), 200-220 (GLAIMPTVLVACALGVFAYAS), 237-257 (AGELIIICSAIAGAGLGFLWF), 264-284 (VFMGDIGALSLGAVLGTIAVI), 289-309 (MVLVIMGGVFVIETLSVMIQV), and 339-359 (VIVRFWIISVVLVLIGLATLK).

It belongs to the glycosyltransferase 4 family. MraY subfamily. The cofactor is Mg(2+).

The protein localises to the cell inner membrane. The catalysed reaction is UDP-N-acetyl-alpha-D-muramoyl-L-alanyl-gamma-D-glutamyl-meso-2,6-diaminopimeloyl-D-alanyl-D-alanine + di-trans,octa-cis-undecaprenyl phosphate = di-trans,octa-cis-undecaprenyl diphospho-N-acetyl-alpha-D-muramoyl-L-alanyl-D-glutamyl-meso-2,6-diaminopimeloyl-D-alanyl-D-alanine + UMP. It participates in cell wall biogenesis; peptidoglycan biosynthesis. Functionally, catalyzes the initial step of the lipid cycle reactions in the biosynthesis of the cell wall peptidoglycan: transfers peptidoglycan precursor phospho-MurNAc-pentapeptide from UDP-MurNAc-pentapeptide onto the lipid carrier undecaprenyl phosphate, yielding undecaprenyl-pyrophosphoryl-MurNAc-pentapeptide, known as lipid I. The sequence is that of Phospho-N-acetylmuramoyl-pentapeptide-transferase from Xanthomonas axonopodis pv. citri (strain 306).